Reading from the N-terminus, the 63-residue chain is Large ribosomal subunit protein bL28 (63 aa).

Residues 1 to 22 (MSRRCAITGKSAMNGHSVSHAN) form a disordered region.

This sequence belongs to the bacterial ribosomal protein bL28 family.

This is Large ribosomal subunit protein bL28 from Campylobacter hominis (strain ATCC BAA-381 / DSM 21671 / CCUG 45161 / LMG 19568 / NCTC 13146 / CH001A).